Reading from the N-terminus, the 418-residue chain is MNKSVAPLLLAASILYGGAVAQQTVWGQCGGIGWSGPTNCAPGSACSTLNPYYAQCIPGATTITTSTRPPSGPTTTTRATSTSSSTPPTSSGVRFAGVNIAGFDFGCTTDGTCVTSKVYPPLKNFTGSNNYPDGIGQMQHFVNEDGMTIFRLPVGWQYLVNNNLGGNLDSTSISKYDQLVQGCLSLGAYCIVDIHNYARWNGGIIGQGGPTNAQFTSLWSQLASKYASQSRVWFGIMNEPHDVNINTWAATVQEVVTAIRNAGATSQFISLPGNDWQSAGAFISDGSAAALSQVTNPDGSTTNLIFDVHKYLDSDNSGTHAECTTNNIDGAFSPLATWLRQNNRQAILTETGGGNVQSCIQDMCQQIQYLNQNSDVYLGYVGWGAGSFDSTYVLTETPTSSGNSWTDTSLVSSCLARK.

A signal peptide spans methionine 1–alanine 21. Position 22 is a pyrrolidone carboxylic acid (glutamine 22). A CBM1 domain is found at glutamine 22–isoleucine 57. Residues proline 58–serine 91 form a linker region. Residues isoleucine 63–serine 91 form a disordered region. The tract at residues glycine 92–lysine 418 is catalytic. The cysteines at positions 107 and 113 are disulfide-linked. An N-linked (GlcNAc) asparagine glycan is attached at asparagine 124. A disulfide bond links cysteine 183 and cysteine 190. Catalysis depends on glutamate 239, which acts as the Proton donor/acceptor. 2 disulfide bridges follow: cysteine 323-cysteine 359 and cysteine 364-cysteine 414. Glutamate 350 functions as the Nucleophile in the catalytic mechanism.

It belongs to the glycosyl hydrolase 5 (cellulase A) family.

The protein localises to the secreted. The enzyme catalyses Endohydrolysis of (1-&gt;4)-beta-D-glucosidic linkages in cellulose, lichenin and cereal beta-D-glucans.. Its function is as follows. Endoglucanase (EG) that cleaves the internal beta-1,4-glucosidic bonds in cellulose. The degradation of cellulose involves an interplay between different cellulolytic enzymes. Hydrolysis starts with EGs, which cut internal glycosidic linkages to reduce the polymerization degree of the substrate and creates new chain ends for exocellobiohydrolases (CBHs). The CBH release the disaccharide cellobiose from the non-reducing end of the cellulose polymer chain. Finally, beta-1,4-glucosidases hydrolyze the cellobiose and other short cello-oligosaccharides into glucose units. The sequence is that of Endoglucanase EG-II (egl2) from Hypocrea jecorina (Trichoderma reesei).